The following is a 181-amino-acid chain: MENTQENPATQSAEDIGSAKQAAQGAAPAAEAADAALAEAQAKVAELQESYLRAKAETENVRRRAQDDVSKAHKFAIESFAEHLLPVLDSLEAAAVDTSGDIAKVREGVELTLRQLTSALEKGRVVAINPVGEKFDPHQHQAISMVPAEQEPNTVVAVLQKGYMIADRVLRPALVTVAQPK.

Residues 1–13 show a composition bias toward polar residues; that stretch reads MENTQENPATQSA. Residues 1–34 are disordered; sequence MENTQENPATQSAEDIGSAKQAAQGAAPAAEAAD. A compositionally biased stretch (low complexity) spans 19 to 34; the sequence is AKQAAQGAAPAAEAAD.

It belongs to the GrpE family. Homodimer.

The protein resides in the cytoplasm. Participates actively in the response to hyperosmotic and heat shock by preventing the aggregation of stress-denatured proteins, in association with DnaK and GrpE. It is the nucleotide exchange factor for DnaK and may function as a thermosensor. Unfolded proteins bind initially to DnaJ; upon interaction with the DnaJ-bound protein, DnaK hydrolyzes its bound ATP, resulting in the formation of a stable complex. GrpE releases ADP from DnaK; ATP binding to DnaK triggers the release of the substrate protein, thus completing the reaction cycle. Several rounds of ATP-dependent interactions between DnaJ, DnaK and GrpE are required for fully efficient folding. The sequence is that of Protein GrpE from Burkholderia vietnamiensis (strain G4 / LMG 22486) (Burkholderia cepacia (strain R1808)).